The primary structure comprises 120 residues: NAD(P)H-quinone oxidoreductase subunit 3, chloroplastic (120 aa).

3 consecutive transmembrane segments (helical) span residues 7–27, 63–83, and 89–109; these read YDSFWIFLLVCISIPLLAFSI, YMFALVFTVFDVETVFLYPWA, and LGLFAFVEVIVFIFILIVGLV.

This sequence belongs to the complex I subunit 3 family. In terms of assembly, NDH is composed of at least 16 different subunits, 5 of which are encoded in the nucleus.

The protein resides in the plastid. Its subcellular location is the chloroplast thylakoid membrane. The catalysed reaction is a plastoquinone + NADH + (n+1) H(+)(in) = a plastoquinol + NAD(+) + n H(+)(out). It catalyses the reaction a plastoquinone + NADPH + (n+1) H(+)(in) = a plastoquinol + NADP(+) + n H(+)(out). NDH shuttles electrons from NAD(P)H:plastoquinone, via FMN and iron-sulfur (Fe-S) centers, to quinones in the photosynthetic chain and possibly in a chloroplast respiratory chain. The immediate electron acceptor for the enzyme in this species is believed to be plastoquinone. Couples the redox reaction to proton translocation, and thus conserves the redox energy in a proton gradient. The polypeptide is NAD(P)H-quinone oxidoreductase subunit 3, chloroplastic (Adiantum capillus-veneris (Maidenhair fern)).